The following is a 566-amino-acid chain: Urease subunit alpha (566 aa).

The Urease domain maps to 128-566 (GGIDTHIHFI…LPMAQRYFLF (439 aa)). Positions 133, 135, and 216 each coordinate Ni(2+). Position 216 is an N6-carboxylysine (lysine 216). Histidine 218 contributes to the substrate binding site. Residues histidine 245 and histidine 271 each coordinate Ni(2+). Catalysis depends on histidine 319, which acts as the Proton donor. Aspartate 359 serves as a coordination point for Ni(2+).

This sequence belongs to the metallo-dependent hydrolases superfamily. Urease alpha subunit family. As to quaternary structure, heterotrimer of UreA (gamma), UreB (beta) and UreC (alpha) subunits. Three heterotrimers associate to form the active enzyme. Ni cation is required as a cofactor. Carboxylation allows a single lysine to coordinate two nickel ions.

It is found in the cytoplasm. The catalysed reaction is urea + 2 H2O + H(+) = hydrogencarbonate + 2 NH4(+). It functions in the pathway nitrogen metabolism; urea degradation; CO(2) and NH(3) from urea (urease route): step 1/1. This is Urease subunit alpha from Pseudomonas fluorescens (strain Pf0-1).